The following is a 623-amino-acid chain: Chaperone protein DnaK (623 aa).

Position 197 is a phosphothreonine; by autocatalysis (threonine 197). The disordered stretch occupies residues 600-623 (KKDENAGANGGNKKDDDVIDAEVE).

It belongs to the heat shock protein 70 family.

Acts as a chaperone. The polypeptide is Chaperone protein DnaK (Campylobacter concisus (strain 13826)).